The chain runs to 792 residues: Probable exo-1,4-beta-xylosidase xlnD (792 aa).

An N-terminal signal peptide occupies residues 1-20; that stretch reads MSAIKSIATVLAAILPSVLA. N-linked (GlcNAc...) asparagine glycosylation is found at Asn-23, Asn-87, Asn-142, and Asn-246. Asp-310 is an active-site residue. N-linked (GlcNAc...) asparagine glycosylation is found at Asn-326, Asn-385, Asn-391, Asn-404, Asn-438, Asn-475, Asn-479, Asn-516, Asn-677, and Asn-699.

The protein belongs to the glycosyl hydrolase 3 family.

The protein localises to the secreted. It catalyses the reaction Hydrolysis of (1-&gt;4)-beta-D-xylans, to remove successive D-xylose residues from the non-reducing termini.. It functions in the pathway glycan degradation; xylan degradation. In terms of biological role, xylan 1,4-beta-xylosidase involved in the hydrolysis of xylan, a major structural heterogeneous polysaccharide found in plant biomass representing the second most abundant polysaccharide in the biosphere, after cellulose. The chain is Probable exo-1,4-beta-xylosidase xlnD (xlnD) from Aspergillus clavatus (strain ATCC 1007 / CBS 513.65 / DSM 816 / NCTC 3887 / NRRL 1 / QM 1276 / 107).